The primary structure comprises 399 residues: LIM/homeobox protein Lhx5 (399 aa).

2 consecutive LIM zinc-binding domains span residues 3–61 (VHCA…RRFG) and 62–125 (TKCA…ASAI). Disordered regions lie at residues 136-185 (CTDR…GPRT) and 301-399 (PSSQ…NTVW). The span at 151–167 (DDTKETDNSTSSDKDTN) shows a compositional bias: basic and acidic residues. The segment at residues 180 to 239 (RRGPRTTIKAKQLETLKAAFVATPKPTRHIREQLAQETGLNMRVIQVWFQNRRSKERRMK) is a DNA-binding region (homeobox).

The protein resides in the nucleus. Probably involved in the patterning of the nervous system, in particular in the early specification of the diencephalon. This Danio rerio (Zebrafish) protein is LIM/homeobox protein Lhx5 (lhx5).